A 212-amino-acid polypeptide reads, in one-letter code: Protein-L-isoaspartate O-methyltransferase (212 aa).

Ser-60 is a catalytic residue.

The protein belongs to the methyltransferase superfamily. L-isoaspartyl/D-aspartyl protein methyltransferase family.

It is found in the cytoplasm. It catalyses the reaction [protein]-L-isoaspartate + S-adenosyl-L-methionine = [protein]-L-isoaspartate alpha-methyl ester + S-adenosyl-L-homocysteine. Functionally, catalyzes the methyl esterification of L-isoaspartyl residues in peptides and proteins that result from spontaneous decomposition of normal L-aspartyl and L-asparaginyl residues. It plays a role in the repair and/or degradation of damaged proteins. The chain is Protein-L-isoaspartate O-methyltransferase from Methanococcus maripaludis (strain DSM 14266 / JCM 13030 / NBRC 101832 / S2 / LL).